A 1428-amino-acid chain; its full sequence is uncharacterized protein (1428 aa).

Disordered stretches follow at residues methionine 1 to valine 53, aspartate 249 to lysine 274, and lysine 377 to alanine 413. Residues alanine 16–glutamine 33 are compositionally biased toward polar residues. Basic and acidic residues predominate over residues valine 34–phenylalanine 51. Residues lysine 256 to aspartate 265 show a composition bias toward polar residues. Residues isoleucine 641 to proline 811 form the Helicase ATP-binding domain. Position 654 to 661 (glycine 654 to serine 661) interacts with ATP. The short motif at aspartate 758–histidine 761 is the DEAH box element. In terms of domain architecture, Helicase C-terminal spans leucine 886 to glutamine 1064.

This sequence belongs to the helicase family. SKI2 subfamily.

Its subcellular location is the cytoplasm. This is an uncharacterized protein from Schizosaccharomyces pombe (strain 972 / ATCC 24843) (Fission yeast).